We begin with the raw amino-acid sequence, 103 residues long: Small ribosomal subunit protein uS10 (103 aa).

This sequence belongs to the universal ribosomal protein uS10 family. In terms of assembly, part of the 30S ribosomal subunit.

Involved in the binding of tRNA to the ribosomes. The polypeptide is Small ribosomal subunit protein uS10 (Haemophilus ducreyi (strain 35000HP / ATCC 700724)).